Consider the following 169-residue polypeptide: NADH-quinone oxidoreductase subunit B (169 aa).

4 residues coordinate [4Fe-4S] cluster: Cys-42, Cys-43, Cys-107, and Cys-136.

Belongs to the complex I 20 kDa subunit family. In terms of assembly, NDH-1 is composed of 14 different subunits. Subunits NuoB, C, D, E, F, and G constitute the peripheral sector of the complex. The cofactor is [4Fe-4S] cluster.

It is found in the cell inner membrane. It catalyses the reaction a quinone + NADH + 5 H(+)(in) = a quinol + NAD(+) + 4 H(+)(out). Its function is as follows. NDH-1 shuttles electrons from NADH, via FMN and iron-sulfur (Fe-S) centers, to quinones in the respiratory chain. The immediate electron acceptor for the enzyme in this species is believed to be ubiquinone. Couples the redox reaction to proton translocation (for every two electrons transferred, four hydrogen ions are translocated across the cytoplasmic membrane), and thus conserves the redox energy in a proton gradient. This is NADH-quinone oxidoreductase subunit B from Nitratiruptor sp. (strain SB155-2).